Consider the following 329-residue polypeptide: Glycerol-3-phosphate dehydrogenase [NAD(P)+] (329 aa).

The NADPH site is built by Y14, R34, and K108. Sn-glycerol 3-phosphate-binding residues include K108, G137, and S139. A141 provides a ligand contact to NADPH. 5 residues coordinate sn-glycerol 3-phosphate: K192, D245, S255, R256, and N257. K192 serves as the catalytic Proton acceptor. R256 contacts NADPH. The NADPH site is built by I280 and E282.

The protein belongs to the NAD-dependent glycerol-3-phosphate dehydrogenase family.

It is found in the cytoplasm. The enzyme catalyses sn-glycerol 3-phosphate + NAD(+) = dihydroxyacetone phosphate + NADH + H(+). It catalyses the reaction sn-glycerol 3-phosphate + NADP(+) = dihydroxyacetone phosphate + NADPH + H(+). The protein operates within membrane lipid metabolism; glycerophospholipid metabolism. Catalyzes the reduction of the glycolytic intermediate dihydroxyacetone phosphate (DHAP) to sn-glycerol 3-phosphate (G3P), the key precursor for phospholipid synthesis. The sequence is that of Glycerol-3-phosphate dehydrogenase [NAD(P)+] from Wigglesworthia glossinidia brevipalpis.